The sequence spans 283 residues: Ubiquinone biosynthesis protein COQ4, mitochondrial (283 aa).

A mitochondrion-targeting transit peptide spans 1 to 25; the sequence is MAIAKSVRARAVGLRSLRVLCAQRS. Residues histidine 166, aspartate 167, histidine 170, and glutamate 182 each contribute to the Zn(2+) site.

The protein belongs to the COQ4 family. Component of a multi-subunit COQ enzyme complex, composed of at least COQ3, COQ4, COQ5, COQ6, COQ7 and COQ9. Zn(2+) is required as a cofactor.

The protein localises to the mitochondrion inner membrane. It carries out the reaction a 4-hydroxy-3-methoxy-5-(all-trans-polyprenyl)benzoate + H(+) = a 2-methoxy-6-(all-trans-polyprenyl)phenol + CO2. It participates in cofactor biosynthesis; ubiquinone biosynthesis. Lyase that catalyzes the C1-decarboxylation of 4-hydroxy-3-methoxy-5-(all-trans-polyprenyl)benzoic acid into 2-methoxy-6-(all-trans-polyprenyl)phenol during ubiquinone biosynthesis. This is Ubiquinone biosynthesis protein COQ4, mitochondrial from Coccidioides immitis (strain RS) (Valley fever fungus).